The sequence spans 219 residues: Thiamine-phosphate synthase (219 aa).

Residues 48–52 (QFRQK) and N84 each bind 4-amino-2-methyl-5-(diphosphooxymethyl)pyrimidine. Positions 85 and 104 each coordinate Mg(2+). A 4-amino-2-methyl-5-(diphosphooxymethyl)pyrimidine-binding site is contributed by S123. 150-152 (TPS) contributes to the 2-[(2R,5Z)-2-carboxy-4-methylthiazol-5(2H)-ylidene]ethyl phosphate binding site. K153 serves as a coordination point for 4-amino-2-methyl-5-(diphosphooxymethyl)pyrimidine. 2-[(2R,5Z)-2-carboxy-4-methylthiazol-5(2H)-ylidene]ethyl phosphate is bound by residues G181 and 199–200 (IS).

It belongs to the thiamine-phosphate synthase family. Requires Mg(2+) as cofactor.

The catalysed reaction is 2-[(2R,5Z)-2-carboxy-4-methylthiazol-5(2H)-ylidene]ethyl phosphate + 4-amino-2-methyl-5-(diphosphooxymethyl)pyrimidine + 2 H(+) = thiamine phosphate + CO2 + diphosphate. The enzyme catalyses 2-(2-carboxy-4-methylthiazol-5-yl)ethyl phosphate + 4-amino-2-methyl-5-(diphosphooxymethyl)pyrimidine + 2 H(+) = thiamine phosphate + CO2 + diphosphate. It carries out the reaction 4-methyl-5-(2-phosphooxyethyl)-thiazole + 4-amino-2-methyl-5-(diphosphooxymethyl)pyrimidine + H(+) = thiamine phosphate + diphosphate. It participates in cofactor biosynthesis; thiamine diphosphate biosynthesis; thiamine phosphate from 4-amino-2-methyl-5-diphosphomethylpyrimidine and 4-methyl-5-(2-phosphoethyl)-thiazole: step 1/1. Functionally, condenses 4-methyl-5-(beta-hydroxyethyl)thiazole monophosphate (THZ-P) and 2-methyl-4-amino-5-hydroxymethyl pyrimidine pyrophosphate (HMP-PP) to form thiamine monophosphate (TMP). In Helicobacter pylori (strain HPAG1), this protein is Thiamine-phosphate synthase.